A 189-amino-acid polypeptide reads, in one-letter code: Ribosome maturation factor RimM (189 aa).

Residues 95–169 form the PRC barrel domain; it reads DEDEFFQTDL…IIKVEPHAAG (75 aa). Positions 168-189 are disordered; that stretch reads AGLIADEHDNPPHESGKKPKKP. The segment covering 172 to 189 has biased composition (basic and acidic residues); sequence ADEHDNPPHESGKKPKKP.

The protein belongs to the RimM family. In terms of assembly, binds ribosomal protein uS19.

The protein resides in the cytoplasm. In terms of biological role, an accessory protein needed during the final step in the assembly of 30S ribosomal subunit, possibly for assembly of the head region. Essential for efficient processing of 16S rRNA. May be needed both before and after RbfA during the maturation of 16S rRNA. It has affinity for free ribosomal 30S subunits but not for 70S ribosomes. The polypeptide is Ribosome maturation factor RimM (Brucella abortus (strain S19)).